Consider the following 107-residue polypeptide: UPF0145 protein BH1111 (107 aa).

Belongs to the UPF0145 family.

This Halalkalibacterium halodurans (strain ATCC BAA-125 / DSM 18197 / FERM 7344 / JCM 9153 / C-125) (Bacillus halodurans) protein is UPF0145 protein BH1111.